Consider the following 431-residue polypeptide: Serine/threonine-protein kinase PknA (431 aa).

Residues Met-1 to Ala-339 are Cytoplasmic-facing. The 260-residue stretch at Tyr-13–Ala-272 folds into the Protein kinase domain. ATP is bound by residues Ile-19–Val-27 and Lys-42. The active-site Proton acceptor is Asp-141. The disordered stretch occupies residues Ala-276–Phe-333. The segment covering Arg-282 to Arg-291 has biased composition (pro residues). Residues Ala-292–Ala-314 are compositionally biased toward low complexity. The chain crosses the membrane as a helical span at residues Leu-340–Ile-360. The Extracellular segment spans residues Lys-361–Gln-431. A disordered region spans residues Asn-366–Pro-418. Positions Pro-368 to Ala-384 are enriched in low complexity.

Belongs to the protein kinase superfamily. Ser/Thr protein kinase family. Post-translationally, autophosphorylated.

Its subcellular location is the cell membrane. The catalysed reaction is L-seryl-[protein] + ATP = O-phospho-L-seryl-[protein] + ADP + H(+). It catalyses the reaction L-threonyl-[protein] + ATP = O-phospho-L-threonyl-[protein] + ADP + H(+). Protein kinase that regulates many aspects of mycobacterial physiology. Is a key component of a signal transduction pathway that regulates cell growth, cell shape and cell division via phosphorylation of target proteins. This chain is Serine/threonine-protein kinase PknA (pknA), found in Mycobacterium bovis (strain ATCC BAA-935 / AF2122/97).